Here is a 365-residue protein sequence, read N- to C-terminus: UDP-N-acetylglucosamine--N-acetylmuramyl-(pentapeptide) pyrophosphoryl-undecaprenol N-acetylglucosamine transferase (365 aa).

UDP-N-acetyl-alpha-D-glucosamine-binding positions include 11–13, asparagine 124, arginine 165, serine 192, isoleucine 246, and glutamine 291; that span reads TGG.

It belongs to the glycosyltransferase 28 family. MurG subfamily.

The protein resides in the cell inner membrane. It catalyses the reaction di-trans,octa-cis-undecaprenyl diphospho-N-acetyl-alpha-D-muramoyl-L-alanyl-D-glutamyl-meso-2,6-diaminopimeloyl-D-alanyl-D-alanine + UDP-N-acetyl-alpha-D-glucosamine = di-trans,octa-cis-undecaprenyl diphospho-[N-acetyl-alpha-D-glucosaminyl-(1-&gt;4)]-N-acetyl-alpha-D-muramoyl-L-alanyl-D-glutamyl-meso-2,6-diaminopimeloyl-D-alanyl-D-alanine + UDP + H(+). The protein operates within cell wall biogenesis; peptidoglycan biosynthesis. Its function is as follows. Cell wall formation. Catalyzes the transfer of a GlcNAc subunit on undecaprenyl-pyrophosphoryl-MurNAc-pentapeptide (lipid intermediate I) to form undecaprenyl-pyrophosphoryl-MurNAc-(pentapeptide)GlcNAc (lipid intermediate II). The sequence is that of UDP-N-acetylglucosamine--N-acetylmuramyl-(pentapeptide) pyrophosphoryl-undecaprenol N-acetylglucosamine transferase from Nitratidesulfovibrio vulgaris (strain DP4) (Desulfovibrio vulgaris).